The chain runs to 375 residues: UDP-4-amino-4,6-dideoxy-N-acetyl-beta-L-altrosamine transaminase (375 aa).

Residues tyrosine 6, 26 to 29, alanine 56, and serine 178 contribute to the substrate site; that span reads KQLT. Lysine 183 carries the post-translational modification N6-(pyridoxal phosphate)lysine. Residues asparagine 228 and 313 to 316 contribute to the substrate site; that span reads QVHY.

It belongs to the DegT/DnrJ/EryC1 family.

It catalyses the reaction UDP-4-amino-4,6-dideoxy-N-acetyl-beta-L-altrosamine + 2-oxoglutarate = UDP-2-acetamido-2,6-dideoxy-beta-L-arabino-hex-4-ulose + L-glutamate. Catalyzes the second step in the biosynthesis of pseudaminic acid, a sialic-acid-like sugar that is used to modify flagellin. Uses UDP-2-acetamido-2,6-dideoxy-beta-L-arabino-4-hexulose as substrate producing UDP-4-amino-4,6-dideoxy-beta-L-AltNAc. The polypeptide is UDP-4-amino-4,6-dideoxy-N-acetyl-beta-L-altrosamine transaminase (pseC) (Helicobacter pylori (strain ATCC 700392 / 26695) (Campylobacter pylori)).